The chain runs to 134 residues: Acyl carrier protein, chloroplastic (134 aa).

The transit peptide at 1–51 directs the protein to the chloroplast; sequence MATTFSASVSMQATSLATTTRISFQKPVLVSNHGRTNLSFNLSRTRLSISC. The region spanning 55 to 130 is the Carrier domain; that stretch reads QETVEKVSEI…QAAELIEELM (76 aa). Serine 90 is subject to O-(pantetheine 4'-phosphoryl)serine.

The protein belongs to the acyl carrier protein (ACP) family. 4'-phosphopantetheine is transferred from CoA to a specific serine of apo-ACP by acpS. This modification is essential for activity because fatty acids are bound in thioester linkage to the sulfhydryl of the prosthetic group. In terms of tissue distribution, seed.

The protein localises to the plastid. It is found in the chloroplast. It participates in lipid metabolism; fatty acid biosynthesis. Functionally, carrier of the growing fatty acid chain in fatty acid biosynthesis. In Brassica napus (Rape), this protein is Acyl carrier protein, chloroplastic (ACL1.C1).